The chain runs to 656 residues: CoB--CoM heterodisulfide reductase iron-sulfur subunit A 2 (656 aa).

152–175 (GGGVSGIQAALDLADMGFEVILVE) contacts FAD. 4 consecutive 4Fe-4S ferredoxin-type domains span residues 238 to 269 (KKPR…FDEG), 286 to 315 (SVFT…FDQE), 577 to 606 (IVSE…LVEK), and 610 to 639 (LVAE…QNHF). Positions 248, 251, 254, 258, 295, 298, 301, 305, 586, 589, 592, 596, 619, 622, 625, and 629 each coordinate [4Fe-4S] cluster.

It belongs to the HdrA family. In terms of assembly, the ferredoxin:CoB-CoM heterodisulfide reductase is composed of three subunits; HdrA, HdrB and HdrC. The cofactor is [4Fe-4S] cluster. It depends on FAD as a cofactor.

It participates in cofactor metabolism; coenzyme M-coenzyme B heterodisulfide reduction; coenzyme B and coenzyme M from coenzyme M-coenzyme B heterodisulfide: step 1/1. In terms of biological role, part of a complex that catalyzes the reversible reduction of CoM-S-S-CoB to the thiol-coenzymes H-S-CoM (coenzyme M) and H-S-CoB (coenzyme B). This chain is CoB--CoM heterodisulfide reductase iron-sulfur subunit A 2 (hdrA2), found in Methanopyrus kandleri (strain AV19 / DSM 6324 / JCM 9639 / NBRC 100938).